We begin with the raw amino-acid sequence, 147 residues long: Sec-independent protein translocase protein TatB (147 aa).

Residues 1-21 (MFDFGFSELIVIAVVTLIVVG) traverse the membrane as a helical segment. The interval 117 to 147 (APAPMSLAPHGDAASAGREPAAVPGSGPEKA) is disordered.

Belongs to the TatB family. The Tat system comprises two distinct complexes: a TatABC complex, containing multiple copies of TatA, TatB and TatC subunits, and a separate TatA complex, containing only TatA subunits. Substrates initially bind to the TatABC complex, which probably triggers association of the separate TatA complex to form the active translocon.

It is found in the cell inner membrane. Functionally, part of the twin-arginine translocation (Tat) system that transports large folded proteins containing a characteristic twin-arginine motif in their signal peptide across membranes. Together with TatC, TatB is part of a receptor directly interacting with Tat signal peptides. TatB may form an oligomeric binding site that transiently accommodates folded Tat precursor proteins before their translocation. The polypeptide is Sec-independent protein translocase protein TatB (Aromatoleum aromaticum (strain DSM 19018 / LMG 30748 / EbN1) (Azoarcus sp. (strain EbN1))).